The following is an 81-amino-acid chain: Putative chemokine-related protein B42 (81 aa).

3 cysteine pairs are disulfide-bonded: Cys7–Cys73, Cys8–Cys29, and Cys11–Cys45.

As to expression, expressed in placenta, heart, lung, liver, pancreas, skeletal muscle and brain.

It localises to the cytoplasm. In Homo sapiens (Human), this protein is Putative chemokine-related protein B42.